The chain runs to 148 residues: Large ribosomal subunit protein uL15 (148 aa).

Residues 1–51 form a disordered region; sequence MNLSNLKPAEGSTKTRKRIGRGAGSGLGGTSTRGHKGAKSRSGYSKKVGFE. Positions 21-31 are enriched in gly residues; that stretch reads RGAGSGLGGTS.

This sequence belongs to the universal ribosomal protein uL15 family. Part of the 50S ribosomal subunit.

Binds to the 23S rRNA. In Bacteroides thetaiotaomicron (strain ATCC 29148 / DSM 2079 / JCM 5827 / CCUG 10774 / NCTC 10582 / VPI-5482 / E50), this protein is Large ribosomal subunit protein uL15.